Here is a 513-residue protein sequence, read N- to C-terminus: MSTKLDTILENPQYAILCGITVFTLFIVQLSLFDRGRNYPLLNPKGSFEISTNRVVREFISDSRNLLEKGKSLFKGQPYRANTDWGEVVVIPPQFLDALKSHKDLDFTIPAQDDSHCYIPGFEPFDADPNLSKVVIKYLTKALNRVTGPLSEEASIAFRTVISDSPEWHEIQPQPAFVRIISRMSSRVFMGEELCRNEEWVKLAGDYTVQSFKTGDELRMYPRWSRPFVHHFLPSCKEVRRTLNAARNCLNPLLERRNAIKAEAKAKGEPCPYDNSFEWFEKEYSTHDPAVAQLNLSLVAIHTTTDLLMETVFNIAQHPELLAPLREEIVRVLSTEGLKKTALLNLKLMDSVLKESQRLRPALLGSFRRLAMADVTLPNGDVIKKGTKIVCSTSHMWSADSHESGEEFDGYRFLRMREKEETEQGKTSHPHLVSPSSDHLGFGFGNHACPGRFFAANELKIALCHMLLKYDWKLAKDAVPRSASFGMILMPDLRTKLLIRRRSEELDIDSVES.

A helical transmembrane segment spans residues 13–32 (QYAILCGITVFTLFIVQLSL). N-linked (GlcNAc...) asparagine glycosylation is found at Asn-130 and Asn-295. Cys-449 is a binding site for heme.

It belongs to the cytochrome P450 family. The cofactor is heme.

Its subcellular location is the membrane. It functions in the pathway mycotoxin biosynthesis. Its function is as follows. Cytochrome P450 monooxygenase; part of the gene cluster that mediates the biosynthesis of equisetin, a trans-fused decalin-containing tetramic acid with antimicrobial activity. The PKS module of eqxS together with the enoylreductase eqxC catalyze the formation of the polyketide unit which is then conjugated to L-serine by the condensation domain of the eqxS NRPS module. Activity of the Dieckmann cyclase domain (RED) results in release of the Dieckmann product intermediate. Diels-Alderase eqx3 is involved in endo-selective Diels-Alder cycloaddition to form the decalin ring, leading to the production of N-desmethylequisetin also called trichosetin. Subsequent N-methylation is carried out by eqxD to give equisetin. The sequence is that of Cytochrome P450 monooxygenase eqxH from Fusarium heterosporum.